A 1141-amino-acid polypeptide reads, in one-letter code: Eukaryotic translation initiation factor 3 subunit A (1141 aa).

One can recognise a PCI domain in the interval leucine 319–threonine 501. Composition is skewed to basic and acidic residues over residues glutamine 588 to glutamate 623 and alanine 829 to aspartate 899. Disordered regions lie at residues glutamine 588 to isoleucine 631 and alanine 829 to arginine 1141. A Phosphoserine modification is found at serine 908. Basic and acidic residues-rich tracts occupy residues glutamate 920–threonine 976, serine 990–arginine 1051, aspartate 1059–glutamine 1087, and threonine 1110–aspartate 1131.

It belongs to the eIF-3 subunit A family. In terms of assembly, component of the eukaryotic translation initiation factor 3 (eIF-3) complex. The eIF-3 complex interacts with pix.

It localises to the cytoplasm. In terms of biological role, RNA-binding component of the eukaryotic translation initiation factor 3 (eIF-3) complex, which is involved in protein synthesis of a specialized repertoire of mRNAs and, together with other initiation factors, stimulates binding of mRNA and methionyl-tRNAi to the 40S ribosome. The eIF-3 complex specifically targets and initiates translation of a subset of mRNAs involved in cell proliferation. In Drosophila sechellia (Fruit fly), this protein is Eukaryotic translation initiation factor 3 subunit A.